Here is a 204-residue protein sequence, read N- to C-terminus: Ribonuclease HII (204 aa).

Positions 1-197 constitute an RNase H type-2 domain; that stretch reads MILGIDEAGR…KNCILNPKLL (197 aa). A divalent metal cation contacts are provided by aspartate 6, glutamate 7, and aspartate 103.

It belongs to the RNase HII family. It depends on Mn(2+) as a cofactor. Requires Mg(2+) as cofactor.

It is found in the cytoplasm. The catalysed reaction is Endonucleolytic cleavage to 5'-phosphomonoester.. Its function is as follows. Endonuclease that specifically degrades the RNA of RNA-DNA hybrids. In Helicobacter pylori (strain P12), this protein is Ribonuclease HII.